A 302-amino-acid chain; its full sequence is UDP-3-O-acyl-N-acetylglucosamine deacetylase (302 aa).

Residues H82, H238, and D242 each coordinate Zn(2+). H265 functions as the Proton donor in the catalytic mechanism.

Belongs to the LpxC family. Zn(2+) serves as cofactor.

The enzyme catalyses a UDP-3-O-[(3R)-3-hydroxyacyl]-N-acetyl-alpha-D-glucosamine + H2O = a UDP-3-O-[(3R)-3-hydroxyacyl]-alpha-D-glucosamine + acetate. It participates in glycolipid biosynthesis; lipid IV(A) biosynthesis; lipid IV(A) from (3R)-3-hydroxytetradecanoyl-[acyl-carrier-protein] and UDP-N-acetyl-alpha-D-glucosamine: step 2/6. Its function is as follows. Catalyzes the hydrolysis of UDP-3-O-myristoyl-N-acetylglucosamine to form UDP-3-O-myristoylglucosamine and acetate, the committed step in lipid A biosynthesis. The protein is UDP-3-O-acyl-N-acetylglucosamine deacetylase of Leptospira biflexa serovar Patoc (strain Patoc 1 / Ames).